Here is a 143-residue protein sequence, read N- to C-terminus: Probable cyclic pyranopterin monophosphate synthase (143 aa).

Substrate is bound by residues 61-63 and 97-98; these read YCH and ME. The active site involves Asp-112.

It belongs to the MoaC family. In terms of assembly, homohexamer; trimer of dimers.

It catalyses the reaction (8S)-3',8-cyclo-7,8-dihydroguanosine 5'-triphosphate = cyclic pyranopterin phosphate + diphosphate. It participates in cofactor biosynthesis; molybdopterin biosynthesis. In terms of biological role, catalyzes the conversion of (8S)-3',8-cyclo-7,8-dihydroguanosine 5'-triphosphate to cyclic pyranopterin monophosphate (cPMP). This is Probable cyclic pyranopterin monophosphate synthase from Thermoplasma acidophilum (strain ATCC 25905 / DSM 1728 / JCM 9062 / NBRC 15155 / AMRC-C165).